A 144-amino-acid chain; its full sequence is Large ribosomal subunit protein uL13 (144 aa).

It belongs to the universal ribosomal protein uL13 family. Part of the 50S ribosomal subunit.

Functionally, this protein is one of the early assembly proteins of the 50S ribosomal subunit, although it is not seen to bind rRNA by itself. It is important during the early stages of 50S assembly. This chain is Large ribosomal subunit protein uL13, found in Nitrosospira multiformis (strain ATCC 25196 / NCIMB 11849 / C 71).